A 461-amino-acid polypeptide reads, in one-letter code: ATP-dependent protease ATPase subunit HslU (461 aa).

Residues valine 21, 63-68 (GVGKTE), aspartate 274, glutamate 339, and arginine 411 each bind ATP.

This sequence belongs to the ClpX chaperone family. HslU subfamily. A double ring-shaped homohexamer of HslV is capped on each side by a ring-shaped HslU homohexamer. The assembly of the HslU/HslV complex is dependent on binding of ATP.

The protein resides in the cytoplasm. Its function is as follows. ATPase subunit of a proteasome-like degradation complex; this subunit has chaperone activity. The binding of ATP and its subsequent hydrolysis by HslU are essential for unfolding of protein substrates subsequently hydrolyzed by HslV. HslU recognizes the N-terminal part of its protein substrates and unfolds these before they are guided to HslV for hydrolysis. In Caldanaerobacter subterraneus subsp. tengcongensis (strain DSM 15242 / JCM 11007 / NBRC 100824 / MB4) (Thermoanaerobacter tengcongensis), this protein is ATP-dependent protease ATPase subunit HslU.